The sequence spans 380 residues: Probable inorganic pyrophosphatase (380 aa).

Asp-198, Asp-203, and Asp-235 together coordinate Mg(2+).

It belongs to the PPase family. It depends on Mg(2+) as a cofactor.

The enzyme catalyses diphosphate + H2O = 2 phosphate + H(+). The protein is Probable inorganic pyrophosphatase of Plasmodium falciparum (isolate 3D7).